A 458-amino-acid polypeptide reads, in one-letter code: UDP-N-acetylmuramoylalanine--D-glutamate ligase (458 aa).

124-130 (GSDGKTT) is an ATP binding site.

This sequence belongs to the MurCDEF family.

Its subcellular location is the cytoplasm. The enzyme catalyses UDP-N-acetyl-alpha-D-muramoyl-L-alanine + D-glutamate + ATP = UDP-N-acetyl-alpha-D-muramoyl-L-alanyl-D-glutamate + ADP + phosphate + H(+). The protein operates within cell wall biogenesis; peptidoglycan biosynthesis. Functionally, cell wall formation. Catalyzes the addition of glutamate to the nucleotide precursor UDP-N-acetylmuramoyl-L-alanine (UMA). The chain is UDP-N-acetylmuramoylalanine--D-glutamate ligase from Clostridium kluyveri (strain NBRC 12016).